The primary structure comprises 706 residues: Elongation factor G (706 aa).

One can recognise a tr-type G domain in the interval 8-297 (SYVRNIGIGA…AVVDYLPSPN (290 aa)). GTP is bound by residues 17–24 (AHIDAGKT), 95–99 (DTPGH), and 149–152 (NKMD).

It belongs to the TRAFAC class translation factor GTPase superfamily. Classic translation factor GTPase family. EF-G/EF-2 subfamily.

Its subcellular location is the cytoplasm. Functionally, catalyzes the GTP-dependent ribosomal translocation step during translation elongation. During this step, the ribosome changes from the pre-translocational (PRE) to the post-translocational (POST) state as the newly formed A-site-bound peptidyl-tRNA and P-site-bound deacylated tRNA move to the P and E sites, respectively. Catalyzes the coordinated movement of the two tRNA molecules, the mRNA and conformational changes in the ribosome. The sequence is that of Elongation factor G from Orientia tsutsugamushi (strain Ikeda) (Rickettsia tsutsugamushi).